Reading from the N-terminus, the 160-residue chain is Protein-export protein SecB (160 aa).

The protein belongs to the SecB family. As to quaternary structure, homotetramer, a dimer of dimers. One homotetramer interacts with 1 SecA dimer.

The protein resides in the cytoplasm. Functionally, one of the proteins required for the normal export of preproteins out of the cell cytoplasm. It is a molecular chaperone that binds to a subset of precursor proteins, maintaining them in a translocation-competent state. It also specifically binds to its receptor SecA. This chain is Protein-export protein SecB, found in Azorhizobium caulinodans (strain ATCC 43989 / DSM 5975 / JCM 20966 / LMG 6465 / NBRC 14845 / NCIMB 13405 / ORS 571).